We begin with the raw amino-acid sequence, 97 residues long: U-scoloptoxin(10)-Sa2a (97 aa).

The signal sequence occupies residues 1–23 (MNKSMLIFFTILFLTYIIEEKEA).

This sequence belongs to the scoloptoxin-10 family. Post-translationally, contains 3 disulfide bonds. Expressed by the venom gland.

It localises to the secreted. The protein is U-scoloptoxin(10)-Sa2a of Scolopendra alternans (Florida Keys giant centipede).